The sequence spans 245 residues: 1-(5-phosphoribosyl)-5-[(5-phosphoribosylamino)methylideneamino] imidazole-4-carboxamide isomerase (245 aa).

The active-site Proton acceptor is the Asp-7. The active-site Proton donor is Asp-129.

Belongs to the HisA/HisF family.

The protein resides in the cytoplasm. The catalysed reaction is 1-(5-phospho-beta-D-ribosyl)-5-[(5-phospho-beta-D-ribosylamino)methylideneamino]imidazole-4-carboxamide = 5-[(5-phospho-1-deoxy-D-ribulos-1-ylimino)methylamino]-1-(5-phospho-beta-D-ribosyl)imidazole-4-carboxamide. It participates in amino-acid biosynthesis; L-histidine biosynthesis; L-histidine from 5-phospho-alpha-D-ribose 1-diphosphate: step 4/9. This Shewanella frigidimarina (strain NCIMB 400) protein is 1-(5-phosphoribosyl)-5-[(5-phosphoribosylamino)methylideneamino] imidazole-4-carboxamide isomerase.